The primary structure comprises 293 residues: tRNA pseudouridine synthase B (293 aa).

The active-site Nucleophile is the Asp-39.

The protein belongs to the pseudouridine synthase TruB family. Type 1 subfamily.

The catalysed reaction is uridine(55) in tRNA = pseudouridine(55) in tRNA. Functionally, responsible for synthesis of pseudouridine from uracil-55 in the psi GC loop of transfer RNAs. This is tRNA pseudouridine synthase B from Rickettsia bellii (strain RML369-C).